Consider the following 259-residue polypeptide: Chymotrypsin-1 (259 aa).

An N-terminal signal peptide occupies residues 1 to 17 (MLRKVFAVVSVLLVVSA). The propeptide at 18–32 (AKVTKLVLDDNYVNR) is activation peptide. Residues 33 to 255 (VVGGEVAKNG…YHDWVRTTMA (223 aa)) enclose the Peptidase S1 domain. A disulfide bridge links cysteine 59 with cysteine 75. Active-site charge relay system residues include histidine 74 and aspartate 119. Cystine bridges form between cysteine 182–cysteine 198 and cysteine 208–cysteine 232. The Charge relay system role is filled by serine 212.

Belongs to the peptidase S1 family. After blood feeding, expression is induced in the midgut epithelium, followed by secretion into the midgut lumen.

It is found in the secreted. The catalysed reaction is Preferential cleavage: Tyr-|-Xaa, Trp-|-Xaa, Phe-|-Xaa, Leu-|-Xaa.. This Anopheles gambiae (African malaria mosquito) protein is Chymotrypsin-1 (CHYM1).